The chain runs to 253 residues: Complement C1q subcomponent subunit B (253 aa).

An N-terminal signal peptide occupies residues 1 to 25; it reads MKTQWSEILTPLLLLLLGLLHVSWA. A Pyrrolidone carboxylic acid modification is found at Gln26. A Collagen-like domain is found at 29-112; the sequence is CTGSPGIPGV…GPRGPKGGSG (84 aa). The interval 29 to 114 is disordered; the sequence is CTGSPGIPGV…RGPKGGSGDY (86 aa). Pro33, Pro36, Pro39, Pro51, and Pro54 each carry 4-hydroxyproline. 2 positions are modified to 5-hydroxylysine: Lys57 and Lys60. At Pro63 the chain carries 4-hydroxyproline. Residues 68–77 are compositionally biased toward basic and acidic residues; sequence DHGELGEKGD. Lys75 carries the post-translational modification 5-hydroxylysine. The segment covering 78–96 has biased composition (low complexity); the sequence is AGIPGIPGKVGPKGPVGPK. Pro81 and Pro84 each carry 4-hydroxyproline. Lys90 and Lys96 each carry 5-hydroxylysine. A 4-hydroxyproline mark is found at Pro99 and Pro102. At Lys108 the chain carries 5-hydroxylysine. A C1q domain is found at 115 to 253; the sequence is KATQKVAFSA…GFLLFPDMDV (139 aa). A disulfide bond links Cys179 and Cys198. Ca(2+) is bound by residues Asp199, Tyr200, and Gln206.

In terms of assembly, core component of the complement C1 complex, a calcium-dependent complex composed of 1 molecule of the C1Q subcomplex, 2 molecules of C1R and 2 molecules of C1S. The C1Q subcomplex is composed 18 subunits: 3 chains of C1QA, C1QB, and C1QC trimerize to form 6 collagen-like triple helices connected to six globular ligand-recognition modules (C1q domain). Post-translationally, hydroxylated on lysine and proline residues. Hydroxylated lysine residues can be glycosylated. Human C1Q contains up to 68.3 hydroxylysine-galactosylglucose residues and up to 2.5 hydroxylysine-galactose per molecule. Total percentage hydroxylysine residues glycosylated is 86.4%. As to expression, highest levels in spleen, lung and brain. Weaker expression in kidney and liver. In the spleen, localized mainly to the red pulp, in cells mainly of monocyte-macrophage lineage. In white pulp, localized in specific dendritic cells such as those from the periarteriolar lymphatic sheath (PALS).

The protein localises to the secreted. It is found in the cell surface. With respect to regulation, the C1Q subcomplex is inhibited by sulfated molecules, such as triterpenoid sulfates, heparan sulfate, or chondroitin sulfates. Core component of the complement C1 complex, a multiprotein complex that initiates the classical pathway of the complement system, a cascade of proteins that leads to phagocytosis and breakdown of pathogens and signaling that strengthens the adaptive immune system. The classical complement pathway is initiated by the C1Q subcomplex of the C1 complex, which specifically binds IgG or IgM immunoglobulins complexed with antigens, forming antigen-antibody complexes on the surface of pathogens: C1QA, together with C1QB and C1QC, specifically recognizes and binds the Fc regions of IgG or IgM via its C1q domain. Immunoglobulin-binding activates the proenzyme C1R, which cleaves C1S, initiating the proteolytic cascade of the complement system. The C1Q subcomplex is activated by a hexamer of IgG complexed with antigens, while it is activated by a pentameric IgM. The C1Q subcomplex also recognizes and binds phosphatidylserine exposed on the surface of cells undergoing programmed cell death, possibly promoting activation of the complement system. The sequence is that of Complement C1q subcomponent subunit B from Rattus norvegicus (Rat).